The sequence spans 97 residues: Citrate lyase acyl carrier protein (97 aa).

S14 is subject to O-(phosphoribosyl dephospho-coenzyme A)serine.

The protein belongs to the CitD family. Oligomer with a subunit composition of (alpha,beta,gamma)6.

The protein localises to the cytoplasm. In terms of biological role, covalent carrier of the coenzyme of citrate lyase. The protein is Citrate lyase acyl carrier protein of Leuconostoc citreum (strain KM20).